Consider the following 504-residue polypeptide: Dimethylsulfoniopropionate lyase 5 (504 aa).

The protein belongs to the aspartate/glutamate racemases family. ALMA1 subfamily. In terms of assembly, homotetramer.

It catalyses the reaction S,S-dimethyl-beta-propiothetin = acrylate + dimethyl sulfide + H(+). Functionally, mediates cleavage of dimethylsulfoniopropionate (DMSP) into dimethyl sulfide (DMS) and acrylate. DMS is the principal form by which sulfur is transported from oceans to the atmosphere and is a key component of the ocean sulfur cycle. The protein is Dimethylsulfoniopropionate lyase 5 of Emiliania huxleyi (strain CCMP1516).